The chain runs to 98 residues: Sm-like protein LSM8 (98 aa).

Residues 2 to 78 form the Sm domain; the sequence is AATTGLETLV…IGVIGELDEE (77 aa).

It belongs to the snRNP Sm proteins family. In terms of assembly, component of the heptameric LSM2-LSM8 complex that forms a seven-membered ring structure with a donut shape. The LSM subunits are arranged in the order LSM8, LSM2, LSM3, LSM6, LSM5, LSM7 and LSM4. LSM8 subunit interacts only with its two neighboring subunits, LSM2 and LSM4. Interacts with the prefoldin co-chaperone subunits PFD1, PFD2, PFD3, PFD4, PFD5 and PFD6. As to expression, expressed in roots, leaves, stems, flowers and siliques.

It localises to the nucleus. In terms of biological role, component of the nuclear LSM2-LSM8 complex which is involved splicing nuclear mRNAs. LSM2-LSM8 binds directly to the U6 small nuclear RNAs (snRNAs). LSM8 is essential for the formation of the nuclear LSM2-LSM8 complex involved in the accurate splicing of selected development-related mRNAs through the stabilization of the spliceosomal U6 snRNA. Plays a critical role in the regulation of development-related gene expression. The polypeptide is Sm-like protein LSM8 (Arabidopsis thaliana (Mouse-ear cress)).